The primary structure comprises 276 residues: Type II pantothenate kinase (276 aa).

Position 8–15 (8–15) interacts with ATP; it reads DAGGTLTK. The active-site Proton acceptor is the Glu-76. Residues Thr-105, 127–131, Phe-143, and Ser-230 each bind ATP; that span reads GGTIM.

This sequence belongs to the type II pantothenate kinase family. As to quaternary structure, homodimer.

It localises to the cytoplasm. The catalysed reaction is (R)-pantothenate + ATP = (R)-4'-phosphopantothenate + ADP + H(+). Its pathway is cofactor biosynthesis; coenzyme A biosynthesis; CoA from (R)-pantothenate: step 1/5. Its function is as follows. Catalyzes the phosphorylation of pantothenate (Pan), the first step in CoA biosynthesis. This Bacillus thuringiensis subsp. konkukian (strain 97-27) protein is Type II pantothenate kinase.